Reading from the N-terminus, the 188-residue chain is Inosine triphosphate pyrophosphatase (188 aa).

Position 11 to 16 (11 to 16 (TGNKHK)) interacts with ITP. Residue Glu39 coordinates Mg(2+). Residues Lys51, 67–68 (DT), Lys84, 143–146 (FGWN), and 171–172 (HR) each bind ITP.

It belongs to the HAM1 NTPase family. As to quaternary structure, homodimer. Mg(2+) serves as cofactor. It depends on Mn(2+) as a cofactor.

Its subcellular location is the cytoplasm. The protein resides in the nucleus. The catalysed reaction is ITP + H2O = IMP + diphosphate + H(+). The enzyme catalyses dITP + H2O = dIMP + diphosphate + H(+). It catalyses the reaction XTP + H2O = XMP + diphosphate + H(+). In terms of biological role, pyrophosphatase that hydrolyzes non-canonical purine nucleotides such as inosine triphosphate (ITP), deoxyinosine triphosphate (dITP) or xanthosine 5'-triphosphate (XTP) to their respective monophosphate derivatives. The enzyme does not distinguish between the deoxy- and ribose forms. Probably excludes non-canonical purines from RNA and DNA precursor pools, thus preventing their incorporation into RNA and DNA and avoiding chromosomal lesions. In Schizosaccharomyces pombe (strain 972 / ATCC 24843) (Fission yeast), this protein is Inosine triphosphate pyrophosphatase.